Here is a 498-residue protein sequence, read N- to C-terminus: Ribose import ATP-binding protein RbsA 1 (498 aa).

ABC transporter domains follow at residues 7-243 and 254-496; these read LHIQ…VGRR and PRGE…IGKS. Position 39–46 (39–46) interacts with ATP; it reads GENGAGKS.

The protein belongs to the ABC transporter superfamily. Ribose importer (TC 3.A.1.2.1) family. In terms of assembly, the complex is composed of an ATP-binding protein (RbsA), two transmembrane proteins (RbsC) and a solute-binding protein (RbsB).

It is found in the cell inner membrane. The enzyme catalyses D-ribose(out) + ATP + H2O = D-ribose(in) + ADP + phosphate + H(+). In terms of biological role, part of the ABC transporter complex RbsABC involved in ribose import. Responsible for energy coupling to the transport system. This chain is Ribose import ATP-binding protein RbsA 1, found in Pasteurella multocida (strain Pm70).